The primary structure comprises 88 residues: UPF0223 protein YktA (88 aa).

This sequence belongs to the UPF0223 family.

The sequence is that of UPF0223 protein YktA (yktA) from Bacillus subtilis (strain 168).